The sequence spans 156 residues: Small ribosomal subunit protein uS7 (156 aa).

Belongs to the universal ribosomal protein uS7 family. As to quaternary structure, part of the 30S ribosomal subunit. Contacts proteins S9 and S11.

One of the primary rRNA binding proteins, it binds directly to 16S rRNA where it nucleates assembly of the head domain of the 30S subunit. Is located at the subunit interface close to the decoding center, probably blocks exit of the E-site tRNA. The polypeptide is Small ribosomal subunit protein uS7 (Listeria innocua serovar 6a (strain ATCC BAA-680 / CLIP 11262)).